The sequence spans 589 residues: Phenylalanine--tRNA ligase beta subunit (589 aa).

One can recognise a B5 domain in the interval 302-379 (LAYRKEMVRA…IAYGYSNIQM (78 aa)). Mg(2+)-binding residues include D357, D363, E366, and D367.

This sequence belongs to the phenylalanyl-tRNA synthetase beta subunit family. Type 2 subfamily. In terms of assembly, heterotetramer; dimer of two heterodimers formed by FARSA and FARSB. Requires Mg(2+) as cofactor.

Its subcellular location is the cytoplasm. The enzyme catalyses tRNA(Phe) + L-phenylalanine + ATP = L-phenylalanyl-tRNA(Phe) + AMP + diphosphate + H(+). The polypeptide is Phenylalanine--tRNA ligase beta subunit (FARSB) (Pongo abelii (Sumatran orangutan)).